A 181-amino-acid polypeptide reads, in one-letter code: Adenine phosphoribosyltransferase (181 aa).

The protein belongs to the purine/pyrimidine phosphoribosyltransferase family. Homodimer.

The protein localises to the cytoplasm. The catalysed reaction is AMP + diphosphate = 5-phospho-alpha-D-ribose 1-diphosphate + adenine. It functions in the pathway purine metabolism; AMP biosynthesis via salvage pathway; AMP from adenine: step 1/1. In terms of biological role, catalyzes a salvage reaction resulting in the formation of AMP, that is energically less costly than de novo synthesis. This is Adenine phosphoribosyltransferase from Brucella abortus (strain S19).